Reading from the N-terminus, the 397-residue chain is Metal tolerance protein 4 (397 aa).

A compositionally biased stretch (basic and acidic residues) spans 1–19 (MEAKGENDARAPLLAERRR). The segment at 1–27 (MEAKGENDARAPLLAERRRNSVGSMRG) is disordered. The Cytoplasmic segment spans residues 1–104 (MEAKGENDAR…EQKQSEFAMK (104 aa)). A helical transmembrane segment spans residues 105-122 (ISNYANMILLALKIYATI). Residues 123-126 (KSGS) are Vacuolar-facing. Residues 127 to 147 (IAIAASTLDSLLDLMAGGILW) form a helical membrane-spanning segment. Residues 148–170 (FTHLSMKSINVYKYPIGKLRVQP) lie on the Cytoplasmic side of the membrane. A helical transmembrane segment spans residues 171–191 (VGIIIFAAVMATLGFQVFVQA). At 192-208 (VEKLIVNETPDKLTPVQ) the chain is on the vacuolar side. A helical membrane pass occupies residues 209–229 (LTWLYSIMIFATVVKLALWLY). Residues 230–248 (CRTSGNKIVRAYAKDHYFD) are Cytoplasmic-facing. The helical transmembrane segment at 249–269 (VVTNVVGLAAAVLGDMFYWWI) threads the bilayer. Residue Asp270 is a topological domain, vacuolar. Residues 271-291 (PVGAIALAVYTITNWSGTVWE) traverse the membrane as a helical segment. Residues 292 to 397 (NAVSLVGESA…ILSKLPSSQP (106 aa)) are Cytoplasmic-facing.

Belongs to the cation diffusion facilitator (CDF) transporter (TC 2.A.4) family. SLC30A subfamily.

The protein localises to the vacuole membrane. Functionally, involved in sequestration of excess metal in the cytoplasm into vacuoles to maintain metal homeostasis. The polypeptide is Metal tolerance protein 4 (MTP4) (Oryza sativa subsp. japonica (Rice)).